The sequence spans 277 residues: Energy-coupling factor transporter ATP-binding protein EcfA1 (277 aa).

One can recognise an ABC transporter domain in the interval 4–238 (IETKNLNYSY…SELLSKNDLK (235 aa)). Position 38-45 (38-45 (GKNGSGKS)) interacts with ATP.

Belongs to the ABC transporter superfamily. Energy-coupling factor EcfA family. Forms a stable energy-coupling factor (ECF) transporter complex composed of 2 membrane-embedded substrate-binding proteins (S component), 2 ATP-binding proteins (A component) and 2 transmembrane proteins (T component).

The protein localises to the cell membrane. Its function is as follows. ATP-binding (A) component of a common energy-coupling factor (ECF) ABC-transporter complex. Unlike classic ABC transporters this ECF transporter provides the energy necessary to transport a number of different substrates. In Oenococcus oeni (strain ATCC BAA-331 / PSU-1), this protein is Energy-coupling factor transporter ATP-binding protein EcfA1.